Consider the following 409-residue polypeptide: Putative integrase/recombinase y4rA (409 aa).

The 86-residue stretch at 112–197 folds into the Core-binding (CB) domain; it reads SAVEQHVQAY…ALRSFLSYAR (86 aa). Positions 220–402 constitute a Tyr recombinase domain; that stretch reads SIPRAIGRDD…DLDALRTLAL (183 aa). Active-site residues include R260, K284, H354, R357, and H380. Residue Y389 is the O-(3'-phospho-DNA)-tyrosine intermediate of the active site.

It belongs to the 'phage' integrase family.

This Sinorhizobium fredii (strain NBRC 101917 / NGR234) protein is Putative integrase/recombinase y4rA.